Reading from the N-terminus, the 678-residue chain is UvrABC system protein C (678 aa).

The segment covering 1-13 has biased composition (basic residues); it reads MKKNISYGKHKTF. The tract at residues 1 to 25 is disordered; the sequence is MKKNISYGKHKTFPSKLNGLEKQHS. One can recognise a GIY-YIG domain in the interval 69-147; it reads HKPGVYRMFD…IKRLHPRFNV (79 aa). The region spanning 257–292 is the UVR domain; sequence QSVKNDMIQAMHKAAEDLDFEQAAVYRDRLSALSHI.

This sequence belongs to the UvrC family. Interacts with UvrB in an incision complex.

The protein resides in the cytoplasm. Functionally, the UvrABC repair system catalyzes the recognition and processing of DNA lesions. UvrC both incises the 5' and 3' sides of the lesion. The N-terminal half is responsible for the 3' incision and the C-terminal half is responsible for the 5' incision. The sequence is that of UvrABC system protein C from Bartonella quintana (strain Toulouse) (Rochalimaea quintana).